The sequence spans 150 residues: Large ribosomal subunit protein bL9 (150 aa).

The protein belongs to the bacterial ribosomal protein bL9 family.

Functionally, binds to the 23S rRNA. This chain is Large ribosomal subunit protein bL9, found in Corynebacterium kroppenstedtii (strain DSM 44385 / JCM 11950 / CIP 105744 / CCUG 35717).